Reading from the N-terminus, the 198-residue chain is Undecaprenyl phosphate transporter A (198 aa).

The next 5 helical transmembrane spans lie at 15-35 (MGYA…EIVL), 47-67 (IGFI…QIFI), 107-127 (VVFS…PAGI), 135-155 (FVVL…YLGI), and 169-189 (GTYT…YFVI).

Belongs to the DedA family.

It localises to the cell membrane. Functionally, flippase that catalyzes the transport of undecaprenyl phosphate (UndP) across the cytoplasmic membrane, from the external side to the cytoplasmic side. Is involved in UndP recycling during peptidoglycan synthesis. The chain is Undecaprenyl phosphate transporter A from Bacillus subtilis (strain 168).